Consider the following 36-residue polypeptide: Photosystem I reaction center subunit VIII (36 aa).

Residues 7–29 traverse the membrane as a helical segment; it reads PSIFVPLVGLVFPAITMASLFIY.

It belongs to the PsaI family.

The protein localises to the plastid. It localises to the chloroplast thylakoid membrane. Its function is as follows. May help in the organization of the PsaL subunit. The sequence is that of Photosystem I reaction center subunit VIII from Psilotum nudum (Whisk fern).